The primary structure comprises 353 residues: Photosystem II D2 protein (353 aa).

At Thr-2 the chain carries N-acetylthreonine. Thr-2 is subject to Phosphothreonine. A helical transmembrane segment spans residues 41-61; it reads CAYFALGGWFTGTTFVTSWYT. His-118 contributes to the chlorophyll a binding site. A helical membrane pass occupies residues 125–141; that stretch reads GFMLRQFELARSVQLRP. Residues Gln-130 and Asn-143 each coordinate pheophytin a. Residues 153-166 traverse the membrane as a helical segment; sequence VFVSVFLIYPLGQS. His-198 serves as a coordination point for chlorophyll a. A helical transmembrane segment spans residues 208-228; the sequence is AALLCAIHGATVENTLFEDGD. A plastoquinone is bound by residues His-215 and Phe-262. Residue His-215 participates in Fe cation binding. Residue His-269 coordinates Fe cation. A helical transmembrane segment spans residues 279 to 295; the sequence is GLWMSALGVVGLALNLR.

The protein belongs to the reaction center PufL/M/PsbA/D family. PSII is composed of 1 copy each of membrane proteins PsbA, PsbB, PsbC, PsbD, PsbE, PsbF, PsbH, PsbI, PsbJ, PsbK, PsbL, PsbM, PsbT, PsbX, PsbY, PsbZ, Psb30/Ycf12, at least 3 peripheral proteins of the oxygen-evolving complex and a large number of cofactors. It forms dimeric complexes. The D1/D2 heterodimer binds P680, chlorophylls that are the primary electron donor of PSII, and subsequent electron acceptors. It shares a non-heme iron and each subunit binds pheophytin, quinone, additional chlorophylls, carotenoids and lipids. There is also a Cl(-1) ion associated with D1 and D2, which is required for oxygen evolution. The PSII complex binds additional chlorophylls, carotenoids and specific lipids. serves as cofactor.

The protein localises to the plastid. It localises to the chloroplast thylakoid membrane. It catalyses the reaction 2 a plastoquinone + 4 hnu + 2 H2O = 2 a plastoquinol + O2. In terms of biological role, photosystem II (PSII) is a light-driven water:plastoquinone oxidoreductase that uses light energy to abstract electrons from H(2)O, generating O(2) and a proton gradient subsequently used for ATP formation. It consists of a core antenna complex that captures photons, and an electron transfer chain that converts photonic excitation into a charge separation. The D1/D2 (PsbA/PsbD) reaction center heterodimer binds P680, the primary electron donor of PSII as well as several subsequent electron acceptors. D2 is needed for assembly of a stable PSII complex. The protein is Photosystem II D2 protein of Spinacia oleracea (Spinach).